A 375-amino-acid polypeptide reads, in one-letter code: Glutamate 5-kinase (375 aa).

An ATP-binding site is contributed by Lys-17. Substrate contacts are provided by Ser-57, Asp-144, and Asn-156. Residue 176 to 177 (TD) coordinates ATP. Residues 283–361 (KGRLWLDTGA…HQIEQILGYV (79 aa)) form the PUA domain.

This sequence belongs to the glutamate 5-kinase family.

Its subcellular location is the cytoplasm. The enzyme catalyses L-glutamate + ATP = L-glutamyl 5-phosphate + ADP. The protein operates within amino-acid biosynthesis; L-proline biosynthesis; L-glutamate 5-semialdehyde from L-glutamate: step 1/2. Functionally, catalyzes the transfer of a phosphate group to glutamate to form L-glutamate 5-phosphate. The sequence is that of Glutamate 5-kinase from Nitrosococcus oceani (strain ATCC 19707 / BCRC 17464 / JCM 30415 / NCIMB 11848 / C-107).